The following is a 292-amino-acid chain: Ribosomal RNA small subunit methyltransferase A (292 aa).

Asn46, Leu48, Gly73, Glu94, Asp118, and Asn136 together coordinate S-adenosyl-L-methionine.

This sequence belongs to the class I-like SAM-binding methyltransferase superfamily. rRNA adenine N(6)-methyltransferase family. RsmA subfamily.

It is found in the cytoplasm. It carries out the reaction adenosine(1518)/adenosine(1519) in 16S rRNA + 4 S-adenosyl-L-methionine = N(6)-dimethyladenosine(1518)/N(6)-dimethyladenosine(1519) in 16S rRNA + 4 S-adenosyl-L-homocysteine + 4 H(+). Specifically dimethylates two adjacent adenosines (A1518 and A1519) in the loop of a conserved hairpin near the 3'-end of 16S rRNA in the 30S particle. May play a critical role in biogenesis of 30S subunits. This Deinococcus radiodurans (strain ATCC 13939 / DSM 20539 / JCM 16871 / CCUG 27074 / LMG 4051 / NBRC 15346 / NCIMB 9279 / VKM B-1422 / R1) protein is Ribosomal RNA small subunit methyltransferase A.